We begin with the raw amino-acid sequence, 82 residues long: Putative membrane protein insertion efficiency factor (82 aa).

It belongs to the UPF0161 family.

The protein localises to the cell inner membrane. Functionally, could be involved in insertion of integral membrane proteins into the membrane. In Francisella tularensis subsp. novicida (strain U112), this protein is Putative membrane protein insertion efficiency factor.